The following is a 179-amino-acid chain: Cell division protein ZapC (179 aa).

This sequence belongs to the ZapC family. As to quaternary structure, interacts directly with FtsZ.

It is found in the cytoplasm. Contributes to the efficiency of the cell division process by stabilizing the polymeric form of the cell division protein FtsZ. Acts by promoting interactions between FtsZ protofilaments and suppressing the GTPase activity of FtsZ. The polypeptide is Cell division protein ZapC (Tolumonas auensis (strain DSM 9187 / NBRC 110442 / TA 4)).